Here is a 420-residue protein sequence, read N- to C-terminus: UDP-N-acetylglucosamine 1-carboxyvinyltransferase (420 aa).

22-23 (KN) is a phosphoenolpyruvate binding site. Arg-94 contributes to the UDP-N-acetyl-alpha-D-glucosamine binding site. Residue Cys-118 is the Proton donor of the active site. Cys-118 is modified (2-(S-cysteinyl)pyruvic acid O-phosphothioketal). UDP-N-acetyl-alpha-D-glucosamine is bound by residues Asp-307 and Ile-329.

This sequence belongs to the EPSP synthase family. MurA subfamily.

The protein localises to the cytoplasm. The catalysed reaction is phosphoenolpyruvate + UDP-N-acetyl-alpha-D-glucosamine = UDP-N-acetyl-3-O-(1-carboxyvinyl)-alpha-D-glucosamine + phosphate. It functions in the pathway cell wall biogenesis; peptidoglycan biosynthesis. Functionally, cell wall formation. Adds enolpyruvyl to UDP-N-acetylglucosamine. The protein is UDP-N-acetylglucosamine 1-carboxyvinyltransferase of Granulibacter bethesdensis (strain ATCC BAA-1260 / CGDNIH1).